We begin with the raw amino-acid sequence, 105 residues long: MMINKEQDLNQLETNQEQSVEQNQTDEKRKPKPNFKRAKKYCRFCAIGQLRIDFIDDLEAIKRFLSPYAKINPRRITGNCNMHQRHVANALKRARYLALVPFIKD.

Residues 1–34 (MMINKEQDLNQLETNQEQSVEQNQTDEKRKPKPN) are disordered. Over residues 9–23 (LNQLETNQEQSVEQN) the composition is skewed to polar residues.

It belongs to the bacterial ribosomal protein bS18 family. Part of the 30S ribosomal subunit. Forms a tight heterodimer with protein bS6.

Its function is as follows. Binds as a heterodimer with protein bS6 to the central domain of the 16S rRNA, where it helps stabilize the platform of the 30S subunit. The protein is Small ribosomal subunit protein bS18 of Mycoplasma genitalium (strain ATCC 33530 / DSM 19775 / NCTC 10195 / G37) (Mycoplasmoides genitalium).